We begin with the raw amino-acid sequence, 352 residues long: Protein RecA (352 aa).

Position 65 to 72 (65 to 72 (GPESSGKT)) interacts with ATP. A disordered region spans residues 332–352 (EEVEKADVKKDAKKDAAEALK). Residues 333–352 (EVEKADVKKDAKKDAAEALK) are compositionally biased toward basic and acidic residues.

The protein belongs to the RecA family.

The protein localises to the cytoplasm. Its function is as follows. Can catalyze the hydrolysis of ATP in the presence of single-stranded DNA, the ATP-dependent uptake of single-stranded DNA by duplex DNA, and the ATP-dependent hybridization of homologous single-stranded DNAs. It interacts with LexA causing its activation and leading to its autocatalytic cleavage. The polypeptide is Protein RecA (Photobacterium profundum (strain SS9)).